We begin with the raw amino-acid sequence, 386 residues long: Succinate--CoA ligase [ADP-forming] subunit beta (386 aa).

Residues lysine 46, 53–55 (GRG), glutamate 99, glutamine 102, and glutamate 107 contribute to the ATP site. Mg(2+)-binding residues include asparagine 199 and aspartate 213. Substrate is bound by residues asparagine 264 and 321-323 (GIV).

The protein belongs to the succinate/malate CoA ligase beta subunit family. In terms of assembly, heterotetramer of two alpha and two beta subunits. Requires Mg(2+) as cofactor.

It catalyses the reaction succinate + ATP + CoA = succinyl-CoA + ADP + phosphate. The catalysed reaction is GTP + succinate + CoA = succinyl-CoA + GDP + phosphate. It functions in the pathway carbohydrate metabolism; tricarboxylic acid cycle; succinate from succinyl-CoA (ligase route): step 1/1. Succinyl-CoA synthetase functions in the citric acid cycle (TCA), coupling the hydrolysis of succinyl-CoA to the synthesis of either ATP or GTP and thus represents the only step of substrate-level phosphorylation in the TCA. The beta subunit provides nucleotide specificity of the enzyme and binds the substrate succinate, while the binding sites for coenzyme A and phosphate are found in the alpha subunit. The polypeptide is Succinate--CoA ligase [ADP-forming] subunit beta (Ruthia magnifica subsp. Calyptogena magnifica).